We begin with the raw amino-acid sequence, 469 residues long: DNA repair and recombination protein rad22 (469 aa).

The tract at residues 265-296 (PAANNHHSEKAGTQINNKDKGSHNSAKPVQRS) is disordered. The segment covering 287–296 (HNSAKPVQRS) has biased composition (polar residues). Ser-296 and Ser-319 each carry phosphoserine. The interval 429–469 (LHDSTTSHNKSDLMRTNSDPQSAMRSRENYDATVDKKAKKG) is disordered. Over residues 431–452 (DSTTSHNKSDLMRTNSDPQSAM) the composition is skewed to polar residues. The segment covering 453–469 (RSRENYDATVDKKAKKG) has biased composition (basic and acidic residues).

This sequence belongs to the RAD52 family. Interacts with rhp51.

The protein resides in the nucleus. Functionally, active in the repair of DNA damage and in mating-type switching. Probably involved in the repair of DNA double-strands breaks. Has a role in promoting S phase completion. This chain is DNA repair and recombination protein rad22 (rad22), found in Schizosaccharomyces pombe (strain 972 / ATCC 24843) (Fission yeast).